A 401-amino-acid chain; its full sequence is Glutamyl-tRNA reductase (401 aa).

Substrate contacts are provided by residues 49-52 (TCNR), Ser92, 97-99 (END), and Gln103. Cys50 acts as the Nucleophile in catalysis. 171-176 (GNGKMA) is an NADP(+) binding site.

The protein belongs to the glutamyl-tRNA reductase family. In terms of assembly, homodimer.

The enzyme catalyses (S)-4-amino-5-oxopentanoate + tRNA(Glu) + NADP(+) = L-glutamyl-tRNA(Glu) + NADPH + H(+). It participates in porphyrin-containing compound metabolism; protoporphyrin-IX biosynthesis; 5-aminolevulinate from L-glutamyl-tRNA(Glu): step 1/2. Functionally, catalyzes the NADPH-dependent reduction of glutamyl-tRNA(Glu) to glutamate 1-semialdehyde (GSA). The polypeptide is Glutamyl-tRNA reductase (Picrophilus torridus (strain ATCC 700027 / DSM 9790 / JCM 10055 / NBRC 100828 / KAW 2/3)).